A 332-amino-acid polypeptide reads, in one-letter code: Phosphate acyltransferase (332 aa).

Belongs to the PlsX family. As to quaternary structure, homodimer. Probably interacts with PlsY.

It is found in the cytoplasm. It carries out the reaction a fatty acyl-[ACP] + phosphate = an acyl phosphate + holo-[ACP]. It participates in lipid metabolism; phospholipid metabolism. In terms of biological role, catalyzes the reversible formation of acyl-phosphate (acyl-PO(4)) from acyl-[acyl-carrier-protein] (acyl-ACP). This enzyme utilizes acyl-ACP as fatty acyl donor, but not acyl-CoA. This Clostridium novyi (strain NT) protein is Phosphate acyltransferase.